Here is a 29-residue protein sequence, read N- to C-terminus: GLWKSLLKNVGKAAGKAALNAVTDMVNQA.

In terms of tissue distribution, expressed by the skin glands.

It is found in the secreted. Has antimicrobial activity. This chain is Dermaseptin-J8, found in Phasmahyla jandaia (Jandaia leaf frog).